The chain runs to 910 residues: Exonuclease mut-7 (910 aa).

In terms of domain architecture, 3'-5' exonuclease spans Ile404–Glu605.

Belongs to the mut-7 family. Mg(2+) serves as cofactor.

Functionally, represses the transposition of Tc1, Tc3, Tc4, and Tc5, perhaps by degrading transposon-specific messages. Also affects sperm development, sensitivity to RNAi of mainly germline expressed genes, silencing of some germline transgenes, X chromosome loss, and is required for cosuppression (functional silencing of chromosomal loci induced by transgenes) and for silencing induced by antisense RNA oligomers. In Caenorhabditis elegans, this protein is Exonuclease mut-7 (mut-7).